A 174-amino-acid polypeptide reads, in one-letter code: Mating-type protein ALPHA2 (174 aa).

Residues 108 to 170 (QPYRGHRFTK…NRRRKQKHPP (63 aa)) constitute a DNA-binding region (homeobox; TALE-type).

This sequence belongs to the TALE/M-ATYP homeobox family. As to quaternary structure, forms a heterodimer with A1.

Its subcellular location is the nucleus. Functionally, mating type proteins are sequence specific DNA-binding proteins that act as master switches in yeast differentiation by controlling gene expression in a cell type-specific fashion. Transcriptional corepressor that acts in conjunction with A1 to repress transcription of haploid-specific genes and of MATALPHA1. This chain is Mating-type protein ALPHA2 (MATALPHA2), found in Nakaseomyces delphensis (Yeast).